The primary structure comprises 96 residues: Small ribosomal subunit protein bS21 (96 aa).

The segment covering 37 to 52 has biased composition (basic and acidic residues); sequence EKPSEKKAREKAEAVR. The disordered stretch occupies residues 37-96; it reads EKPSEKKAREKAEAVRRARKLARKKLQREGLLPSKPKPVFGADRGRGAAGGAGGAPRPAR. Residues 53–62 show a composition bias toward basic residues; the sequence is RARKLARKKL.

This sequence belongs to the bacterial ribosomal protein bS21 family.

The sequence is that of Small ribosomal subunit protein bS21 from Afipia carboxidovorans (strain ATCC 49405 / DSM 1227 / KCTC 32145 / OM5) (Oligotropha carboxidovorans).